An 88-amino-acid polypeptide reads, in one-letter code: Putative transposase InsN for insertion sequence element IS911B (88 aa).

This sequence belongs to the transposase 8 family.

Functionally, involved in the transposition of the insertion sequence IS911. The protein is Putative transposase InsN for insertion sequence element IS911B (insN2) of Escherichia coli (strain K12).